The primary structure comprises 203 residues: N-(5'-phosphoribosyl)anthranilate isomerase (203 aa).

The protein belongs to the TrpF family.

The enzyme catalyses N-(5-phospho-beta-D-ribosyl)anthranilate = 1-(2-carboxyphenylamino)-1-deoxy-D-ribulose 5-phosphate. The protein operates within amino-acid biosynthesis; L-tryptophan biosynthesis; L-tryptophan from chorismate: step 3/5. The polypeptide is N-(5'-phosphoribosyl)anthranilate isomerase (Thermoanaerobacter sp. (strain X514)).